Reading from the N-terminus, the 801-residue chain is Na(+)/H(+) antiporter subunit A1 (801 aa).

Helical transmembrane passes span 4–25, 30–49, 79–101, 108–127, 131–153, 166–188, 208–230, 243–265, 270–289, 302–324, 339–361, 373–395, 429–451, 472–494, 526–548, 589–611, 621–641, 646–668, 672–694, 707–729, and 767–784; these read LHIA…YRFF, LGWF…LTLI, LGLL…SIGY, LGNF…GVVL, VIIL…SFWR, LIIT…IPTQ, FIFA…PFYI, SAYL…MTPI, QGWV…WASL, AFST…ISYH, AAIF…TGAV, LGGL…LSMA, YLFP…KFIM, ILML…FPGI, AFLS…SYWV, NNLV…SVPF, IRIF…LILF, LFSI…FFKA, ALTQ…YHLP, LTNA…IAYG, and LFES…YTMI.

The protein belongs to the CPA3 antiporters (TC 2.A.63) subunit A family. As to quaternary structure, may form a heterooligomeric complex that consists of seven subunits: mnhA1, mnhB1, mnhC1, mnhD1, mnhE1, mnhF1 and mnhG1.

The protein resides in the cell membrane. Na(+) extrusion is completely inhibited by the H(+) conductor carbonyl cyanide m-chlorophenylhydrazone (CCCP). In terms of biological role, mnh complex is a Na(+)/H(+) antiporter involved in Na(+) excretion. The chain is Na(+)/H(+) antiporter subunit A1 (mnhA1) from Staphylococcus aureus (strain MSSA476).